The primary structure comprises 466 residues: Ribulose bisphosphate carboxylase large chain (466 aa).

The residue at position 4 (Lys-4) is an N6,N6,N6-trimethyllysine. Asn-113 and Thr-163 together coordinate substrate. The active-site Proton acceptor is Lys-165. Lys-167 is a binding site for substrate. Mg(2+)-binding residues include Lys-191, Asp-193, and Glu-194. Lys-191 carries the post-translational modification N6-carboxylysine. His-284 (proton acceptor) is an active-site residue. Substrate-binding residues include Arg-285, His-317, and Ser-369.

The protein belongs to the RuBisCO large chain family. Type I subfamily. In terms of assembly, heterohexadecamer of 8 large chains and 8 small chains; disulfide-linked. The disulfide link is formed within the large subunit homodimers. The cofactor is Mg(2+). The disulfide bond which can form in the large chain dimeric partners within the hexadecamer appears to be associated with oxidative stress and protein turnover.

It localises to the plastid. The protein resides in the chloroplast. It catalyses the reaction 2 (2R)-3-phosphoglycerate + 2 H(+) = D-ribulose 1,5-bisphosphate + CO2 + H2O. The catalysed reaction is D-ribulose 1,5-bisphosphate + O2 = 2-phosphoglycolate + (2R)-3-phosphoglycerate + 2 H(+). Its function is as follows. RuBisCO catalyzes two reactions: the carboxylation of D-ribulose 1,5-bisphosphate, the primary event in carbon dioxide fixation, as well as the oxidative fragmentation of the pentose substrate in the photorespiration process. Both reactions occur simultaneously and in competition at the same active site. The sequence is that of Ribulose bisphosphate carboxylase large chain from Barleria prionitis (Porcupine flower).